A 192-amino-acid chain; its full sequence is Erythropoietin (192 aa).

A signal peptide spans 1 to 26 (MGVRECPALLLLLSLLLPPLGLPALG). 2 disulfides stabilise this stretch: cysteine 33/cysteine 187 and cysteine 55/cysteine 59. The N-linked (GlcNAc...) asparagine glycan is linked to asparagine 50. 2 N-linked (GlcNAc...) asparagine glycosylation sites follow: asparagine 64 and asparagine 109.

It belongs to the EPO/TPO family.

The protein resides in the secreted. Its function is as follows. Hormone involved in the regulation of erythrocyte proliferation and differentiation and the maintenance of a physiological level of circulating erythrocyte mass. Binds to EPOR leading to EPOR dimerization and JAK2 activation thereby activating specific downstream effectors, including STAT1 and STAT3. The polypeptide is Erythropoietin (EPO) (Equus caballus (Horse)).